Consider the following 94-residue polypeptide: MPRSLKKGPFIDIHLLKKIQKSLKLTNKKSIRTWSRRSTIFPNMVGLTISIHNGRQHVPVFITEEMVGHKLGEFSITRTYRGHTADKKIKKPIK.

Belongs to the universal ribosomal protein uS19 family.

Its function is as follows. Protein S19 forms a complex with S13 that binds strongly to the 16S ribosomal RNA. The sequence is that of Small ribosomal subunit protein uS19 from Buchnera aphidicola subsp. Cinara cedri (strain Cc).